The following is a 477-amino-acid chain: RTX-III toxin determinant D (477 aa).

Residues 1-59 (MKLWILGLGEFFQRYRNIWREIWKIRKQLDTPARQKDENEFLPRHLELIETPISKKPRL) are Cytoplasmic-facing. Residues 60 to 77 (IAYLIMLFLFLAIVISII) traverse the membrane as a helical segment. Topologically, residues 78-477 (SKVEIVASAT…ESITESLRER (400 aa)) are periplasmic.

The protein belongs to the membrane fusion protein (MFP) (TC 8.A.1) family.

It localises to the cell inner membrane. Functionally, involved in the transport of the toxin RTX-III. The protein is RTX-III toxin determinant D (apxIIID) of Actinobacillus pleuropneumoniae (Haemophilus pleuropneumoniae).